A 176-amino-acid polypeptide reads, in one-letter code: Pituitary adenylate cyclase-activating polypeptide (176 aa).

Positions 1 to 24 are cleaved as a signal peptide; it reads MTMCSGARLALLVYGILMHSSVYG. Residues 25–80 constitute a propeptide that is removed on maturation; the sequence is SPAASGLRFPGIRPENEVYDEDGNPQQDFYDSESLGVGSPASALRDAYALYYPAEE. The interval 98–135 is disordered; sequence QPSARRSPADAHGQGLGWDPGGSADDDSEPLSKRHSDG. Positions 150-158 are important for receptor binding; it reads VKKYLAAVL. Leu158 carries the leucine amide modification. Lys169 is modified (lysine amide). A propeptide spanning residues 173-176 is cleaved from the precursor; sequence IPYL.

Belongs to the glucagon family. In terms of assembly, interacts with ADCYAP1R1 (via N-terminal extracellular domain); both PACAP27 and PACAP38 neuropeptides function as ligand for the ADCYAP1R1 receptor, which modulates the activity of downstream effectors. Interacts with VIPR1 and VIPR2; functions as ligand for VIPR1 and VIPR2 receptors, which modulate the activity of downstream effectors.

The protein localises to the secreted. Its function is as follows. PACAP is a neuropeptide involved in diverse array of physiological processes through activating the PACAP subfamily of class B1 G protein-coupled receptors: VIP receptor 1 (VIPR1), VIP receptor 2 (VIPR2), and PACAP type I receptor (ADCYAP1R1). Exerts neuroprotective and general cytoprotective effects due to anti-apoptotic, anti-inflammatory, and antioxidant actions. Promotes neuron projection development through the RAPGEF2/Rap1/B-Raf/ERK pathway. In chromaffin cells, induces long-lasting increase of intracellular calcium concentrations and neuroendocrine secretion. Involved in the control of glucose homeostasis, induces insulin secretion by pancreatic beta cells. PACAP exists in two bioactive forms from proteolysis of the same precursor protein, PACAP27 and PACAP38, which differ by eleven amino acid residues in the C-terminus. In Bos taurus (Bovine), this protein is Pituitary adenylate cyclase-activating polypeptide (ADCYAP1).